The sequence spans 408 residues: Aminomethyltransferase, mitochondrial (408 aa).

Residues 1–30 constitute a mitochondrion transit peptide; that stretch reads MRGGGLWQLGQSVTRRLAQAEKKVIARRCF. Glutamate 235, arginine 266, and tyrosine 404 together coordinate substrate.

The protein belongs to the GcvT family. The glycine cleavage system is composed of four proteins: P, T, L and H.

The protein resides in the mitochondrion. The enzyme catalyses N(6)-[(R)-S(8)-aminomethyldihydrolipoyl]-L-lysyl-[protein] + (6S)-5,6,7,8-tetrahydrofolate = N(6)-[(R)-dihydrolipoyl]-L-lysyl-[protein] + (6R)-5,10-methylene-5,6,7,8-tetrahydrofolate + NH4(+). Functionally, the glycine cleavage system catalyzes the degradation of glycine. The polypeptide is Aminomethyltransferase, mitochondrial (GDCST) (Mesembryanthemum crystallinum (Common ice plant)).